We begin with the raw amino-acid sequence, 613 residues long: Portal protein (613 aa).

Residues 577–613 (ATGGDHGIRQAPSARGDAEPDHAKSKPARDPPPGAGS) form a disordered region. Positions 592-605 (GDAEPDHAKSKPAR) are enriched in basic and acidic residues.

This sequence belongs to the herpesviridae portal protein family. In terms of assembly, homododecamerizes. Interacts with terminase subunits TRM1 and TRM3.

The protein localises to the virion. The protein resides in the host nucleus. Forms a portal in the viral capsid through which viral DNA is translocated during DNA packaging. Assembles as a dodecamer at a single fivefold axe of the T=16 icosahedric capsid. Binds to the molecular motor that translocates the viral DNA, termed terminase. In Homo sapiens (Human), this protein is Portal protein.